Reading from the N-terminus, the 473-residue chain is Sarcalumenin (473 aa).

The signal sequence occupies residues 1 to 20 (MRALVLLGCLLASLLFSGQA). Positions 90–331 (ITSKPMVLFL…IENRLENKIA (242 aa)) constitute a Dynamin-type G domain. Positions 100 to 107 (GPWSVGKS) are G1 motif. Residues 128–129 (EP) form a G2 motif region. A G3 motif region spans residues 190–193 (DTPG). The G4 motif stretch occupies residues 255 to 258 (NKAD). Pro-278 is a region of interest (G5 motif). 2 N-linked (GlcNAc...) asparagine glycosylation sites follow: Asn-281 and Asn-389.

It belongs to the TRAFAC class dynamin-like GTPase superfamily. Dynamin/Fzo/YdjA family. N-glycosylated.

Its subcellular location is the sarcoplasmic reticulum lumen. The protein localises to the sarcoplasmic reticulum membrane. The chain is Sarcalumenin (SRL) from Homo sapiens (Human).